Consider the following 210-residue polypeptide: Thymidylate kinase (210 aa).

10-17 (GGEGAGKS) is an ATP binding site.

The protein belongs to the thymidylate kinase family.

It catalyses the reaction dTMP + ATP = dTDP + ADP. In terms of biological role, phosphorylation of dTMP to form dTDP in both de novo and salvage pathways of dTTP synthesis. The sequence is that of Thymidylate kinase from Magnetococcus marinus (strain ATCC BAA-1437 / JCM 17883 / MC-1).